Consider the following 374-residue polypeptide: Glutamate 5-kinase (374 aa).

An ATP-binding site is contributed by K9. Substrate-binding residues include S49, D136, and N148. Residues 168–169 (TD) and 210–216 (TGGMRSK) each bind ATP. Residues 276–354 (SGTITVDSGA…EEARQYSYLH (79 aa)) form the PUA domain.

Belongs to the glutamate 5-kinase family.

It is found in the cytoplasm. It carries out the reaction L-glutamate + ATP = L-glutamyl 5-phosphate + ADP. It participates in amino-acid biosynthesis; L-proline biosynthesis; L-glutamate 5-semialdehyde from L-glutamate: step 1/2. Its function is as follows. Catalyzes the transfer of a phosphate group to glutamate to form L-glutamate 5-phosphate. The chain is Glutamate 5-kinase from Geobacillus thermodenitrificans (strain NG80-2).